The sequence spans 31 residues: Cyclotide vibi-G (31 aa).

Residues 1 to 31 (GTFPCGESCVFIPCLTSAIGCSCKSKVCYKN) constitute a cross-link (cyclopeptide (Gly-Asn)). 3 disulfide bridges follow: Cys-5–Cys-21, Cys-9–Cys-23, and Cys-14–Cys-28.

Post-translationally, this is a cyclic peptide.

Functionally, probably participates in a plant defense mechanism. Has cytotoxic activity, active against a human lymphoma cell line with an IC(50) of 0.96 uM. The protein is Cyclotide vibi-G of Viola biflora (Yellow wood violet).